A 225-amino-acid polypeptide reads, in one-letter code: Germin-like protein 8-3 (225 aa).

Positions Met1–Ala23 are cleaved as a signal peptide. Cys33 and Cys48 form a disulfide bridge. Asn53 and Asn78 each carry an N-linked (GlcNAc...) asparagine glycan. In terms of domain architecture, Cupin type-1 spans Phe60–Asp213. Residues His111, His113, Glu118, and His158 each coordinate Mn(2+).

The protein belongs to the germin family. As to quaternary structure, oligomer (believed to be a pentamer but probably hexamer).

The protein resides in the secreted. The protein localises to the extracellular space. Its subcellular location is the apoplast. Plays a role in broad-spectrum disease resistance. Probably has no oxalate oxidase activity even if the active site is conserved. In Oryza sativa subsp. japonica (Rice), this protein is Germin-like protein 8-3 (GER2).